Here is a 219-residue protein sequence, read N- to C-terminus: Proline-rich protein 27 (219 aa).

Residues 1–15 (MKLLLWACIVCVAFA) form the signal peptide. Low complexity predominate over residues 155-204 (AAEPAAEAPVGAEPAAEAPVAAEPAAEAPVGVEPAAEEPSPAEPATAKPA). The tract at residues 155-219 (AAEPAAEAPV…PSPSLEQANQ (65 aa)) is disordered.

It localises to the secreted. The polypeptide is Proline-rich protein 27 (PRR27) (Homo sapiens (Human)).